A 311-amino-acid polypeptide reads, in one-letter code: Pyrimidine-specific ribonucleoside hydrolase RihA (311 aa).

The active site involves H240.

This sequence belongs to the IUNH family. RihA subfamily.

Its function is as follows. Hydrolyzes cytidine or uridine to ribose and cytosine or uracil, respectively. This is Pyrimidine-specific ribonucleoside hydrolase RihA from Shigella boydii serotype 4 (strain Sb227).